A 108-amino-acid polypeptide reads, in one-letter code: ATP-dependent Clp protease adapter protein ClpS (108 aa).

It belongs to the ClpS family. In terms of assembly, binds to the N-terminal domain of the chaperone ClpA.

Its function is as follows. Involved in the modulation of the specificity of the ClpAP-mediated ATP-dependent protein degradation. The chain is ATP-dependent Clp protease adapter protein ClpS from Mycobacterium leprae (strain TN).